A 398-amino-acid chain; its full sequence is Acetate kinase (398 aa).

Asparagine 8 provides a ligand contact to Mg(2+). Lysine 15 contacts ATP. Residue arginine 89 participates in substrate binding. Aspartate 146 acts as the Proton donor/acceptor in catalysis. ATP is bound by residues 206 to 210, 283 to 285, and 331 to 335; these read HIGNG, DMR, and GMGEN. Glutamate 383 lines the Mg(2+) pocket.

The protein belongs to the acetokinase family. As to quaternary structure, homodimer. It depends on Mg(2+) as a cofactor. The cofactor is Mn(2+).

The protein localises to the cytoplasm. The enzyme catalyses acetate + ATP = acetyl phosphate + ADP. Its pathway is metabolic intermediate biosynthesis; acetyl-CoA biosynthesis; acetyl-CoA from acetate: step 1/2. Its function is as follows. Catalyzes the formation of acetyl phosphate from acetate and ATP. Can also catalyze the reverse reaction. The chain is Acetate kinase from Streptococcus pyogenes serotype M12 (strain MGAS2096).